A 69-amino-acid polypeptide reads, in one-letter code: Large ribosomal subunit protein uL30 (69 aa).

The protein belongs to the universal ribosomal protein uL30 family. In terms of assembly, part of the 50S ribosomal subunit.

This chain is Large ribosomal subunit protein uL30, found in Rhizobium etli (strain CIAT 652).